A 67-amino-acid polypeptide reads, in one-letter code: Probable pilin MJ1400 (67 aa).

A propeptide spanning residues methionine 1–glycine 13 is cleaved from the precursor. Residues glutamine 14–leucine 22 carry the QXSXEXXXL motif.

The N-terminus is cleaved by the prepilin peptidase EppA, which recognizes the class III signal sequence.

It is found in the secreted. It localises to the cell surface. Its subcellular location is the fimbrium. In Methanocaldococcus jannaschii (strain ATCC 43067 / DSM 2661 / JAL-1 / JCM 10045 / NBRC 100440) (Methanococcus jannaschii), this protein is Probable pilin MJ1400.